Consider the following 342-residue polypeptide: D-alanine--D-alanine ligase (342 aa).

An ATP-grasp domain is found at 132 to 326; sequence KLYAKECGIE…VAKHLPKSKN (195 aa). 159 to 210 serves as a coordination point for ATP; it reads EYPVIIKPNHLGSSIGVSVVYDSSELEYALDVAFEFDDEVLIEPFIEGIEEY. Positions 282, 294, and 296 each coordinate Mg(2+).

This sequence belongs to the D-alanine--D-alanine ligase family. The cofactor is Mg(2+). Mn(2+) serves as cofactor.

Its subcellular location is the cytoplasm. The catalysed reaction is 2 D-alanine + ATP = D-alanyl-D-alanine + ADP + phosphate + H(+). It participates in cell wall biogenesis; peptidoglycan biosynthesis. Functionally, cell wall formation. In Nitratiruptor sp. (strain SB155-2), this protein is D-alanine--D-alanine ligase.